Here is a 763-residue protein sequence, read N- to C-terminus: Glycerophosphodiester phosphodiesterase GDPDL1 (763 aa).

Residues 1–35 form the signal peptide; it reads MNSRPSNPTKLVIRSSTLLFCGVVLIHLFAAQIDA. At 36 to 744 the chain is on the extracellular side; the sequence is QRSTSRWQTL…STIAQAPSGQ (709 aa). One can recognise a GP-PDE 1 domain in the interval 50–350; the sequence is PLVIARGGFS…DFPITASAAV (301 aa). Residues Asn105, Asn192, Asn248, Asn257, Asn315, Asn359, Asn430, Asn534, Asn547, and Asn654 are each glycosylated (N-linked (GlcNAc...) asparagine). The GP-PDE 2 domain maps to 366-668; that stretch reads FLVISKDGAS…EFPFTAARYK (303 aa). Residues 745–762 traverse the membrane as a helical segment; sequence TRLKLSLLLSVFFLSLLL. Leu763 is a topological domain (cytoplasmic).

Belongs to the glycerophosphoryl diester phosphodiesterase family. The cofactor is Ca(2+). Expressed in rosette and cauline leaves, stems, flowers and siliques.

The protein localises to the cell membrane. The catalysed reaction is a sn-glycero-3-phosphodiester + H2O = an alcohol + sn-glycerol 3-phosphate + H(+). In terms of biological role, hydrolyzes glycerolphosphoglycerol, glycerophosphocholine and glycerophosphoethanolamine in vitro. This chain is Glycerophosphodiester phosphodiesterase GDPDL1, found in Arabidopsis thaliana (Mouse-ear cress).